Reading from the N-terminus, the 62-residue chain is Synergistic-type venom protein C8S2, chain 1 (62 aa).

Disulfide bonds link C3–C24, C17–C42, and C46–C57.

It belongs to the three-finger toxin family. Short-chain subfamily. Aminergic toxin sub-subfamily. Heterodimer of C8S2 chain 1 and chain 2 (AC P01411); disulfide-linked. As to expression, expressed by the venom gland.

It localises to the secreted. Its function is as follows. This protein shows a synergetic toxic effect in that it enhances the toxicity of other toxins. The polypeptide is Synergistic-type venom protein C8S2, chain 1 (Dendroaspis angusticeps (Eastern green mamba)).